The chain runs to 95 residues: Co-chaperonin GroES (95 aa).

The protein belongs to the GroES chaperonin family. Heptamer of 7 subunits arranged in a ring. Interacts with the chaperonin GroEL.

Its subcellular location is the cytoplasm. Together with the chaperonin GroEL, plays an essential role in assisting protein folding. The GroEL-GroES system forms a nano-cage that allows encapsulation of the non-native substrate proteins and provides a physical environment optimized to promote and accelerate protein folding. GroES binds to the apical surface of the GroEL ring, thereby capping the opening of the GroEL channel. This is Co-chaperonin GroES from Caldicellulosiruptor bescii (strain ATCC BAA-1888 / DSM 6725 / KCTC 15123 / Z-1320) (Anaerocellum thermophilum).